We begin with the raw amino-acid sequence, 275 residues long: Fos-related antigen 1 (275 aa).

Disordered regions lie at residues Met-1–Gln-33 and Thr-71–Glu-115. A compositionally biased stretch (low complexity) spans Glu-7–Gln-33. Residues Glu-107–His-170 enclose the bZIP domain. The tract at residues Arg-109–Lys-129 is basic motif. The interval Leu-135 to Leu-163 is leucine-zipper. The segment covering Arg-171–Thr-184 has biased composition (basic and acidic residues). The tract at residues Arg-171 to Leu-275 is disordered. 3 stretches are compositionally biased toward low complexity: residues Gly-185 to Gly-194, Leu-219 to Leu-237, and Ser-256 to Leu-275. Ser-269 carries the phosphoserine modification.

Belongs to the bZIP family. Fos subfamily. Heterodimer. Interacts with the BAF multiprotein chromatin-remodeling complex subunits SMARCB1 and SMARCD1. Interacts with ARID1A and JUN.

Its subcellular location is the nucleus. The sequence is that of Fos-related antigen 1 (Fosl1) from Rattus norvegicus (Rat).